A 287-amino-acid polypeptide reads, in one-letter code: ATP synthase gamma chain (287 aa).

It belongs to the ATPase gamma chain family. F-type ATPases have 2 components, CF(1) - the catalytic core - and CF(0) - the membrane proton channel. CF(1) has five subunits: alpha(3), beta(3), gamma(1), delta(1), epsilon(1). CF(0) has three main subunits: a, b and c.

The protein resides in the cell inner membrane. Functionally, produces ATP from ADP in the presence of a proton gradient across the membrane. The gamma chain is believed to be important in regulating ATPase activity and the flow of protons through the CF(0) complex. The sequence is that of ATP synthase gamma chain from Xanthomonas campestris pv. campestris (strain B100).